The following is a 393-amino-acid chain: Dwarfin sma-3 (393 aa).

Residues P10–L139 enclose the MH1 domain. Zn(2+) contacts are provided by C65, C110, C124, and H129. Residues P136–P190 are disordered. Positions S141–S176 are enriched in low complexity. Residues W197–T393 form the MH2 domain.

Belongs to the dwarfin/SMAD family.

It is found in the cytoplasm. Its subcellular location is the nucleus. In terms of biological role, involved in TGF-beta pathway. Plays a role in male tail tip morphogenesis. This is Dwarfin sma-3 from Caenorhabditis elegans.